The chain runs to 658 residues: PTS system 2-O-alpha-mannosyl-D-glycerate-specific EIIABC component (658 aa).

The Periplasmic segment spans residues 1-313 (MVLFYRAHWR…TELKQALLSG (313 aa)). The PTS EIIA type-2 domain occupies 25–171 (TLTHRDALCL…DELLSALDDK (147 aa)). Residue H87 is the Tele-phosphohistidine intermediate; for EIIA activity of the active site. H87 carries the phosphohistidine; by HPr modification. The region spanning 186–282 (IVCVTACPAG…AEALIQQALT (97 aa)) is the PTS EIIB type-2 domain. Residue C192 is the Phosphocysteine intermediate; for EIIB activity of the active site. C192 is modified (phosphocysteine; by EIIA). Residues 306 to 641 (LKQALLSGIS…AISTAILLMW (336 aa)) form the PTS EIIC type-2 domain. A helical transmembrane segment spans residues 314–334 (ISFAVPLIVAGGTVLAVAVLL). At 335 to 358 (SQIFGLQDLFNEENSWLWMYRKLG) the chain is on the cytoplasmic side. A helical transmembrane segment spans residues 359-379 (GGLLGILMVPVLAAYTAYSLA). Topologically, residues 380–389 (DKPALAPGFA) are periplasmic. Residues 390–410 (AGLAANMIGSGFLGAVVGGLI) traverse the membrane as a helical segment. Over 411–433 (AGYLMRWVKNHLRLSSKFNGFLT) the chain is Cytoplasmic. A helical membrane pass occupies residues 434 to 454 (FYLYPVLGTLGAGSLMLFVVG). The Periplasmic segment spans residues 455–474 (EPVAWINNSLTAWLNGLSGS). A helical membrane pass occupies residues 475 to 495 (NALLLGAILGFMCSFDLGGPV). At 496 to 500 (NKAAY) the chain is on the cytoplasmic side. The helical transmembrane segment at 501 to 521 (AFCLGAMANGVYGPYAIFASV) threads the bilayer. The Periplasmic segment spans residues 522 to 551 (KMVSAFTVTASTMLAPRLFKEFEIETGKST). A helical transmembrane segment spans residues 552 to 572 (WLLGLAGITEGAIPMAIEDPL). Position 573 (R573) is a topological domain, cytoplasmic. A helical transmembrane segment spans residues 574-594 (VIGSFVLGSMVTGAIVGAMNI). Over 595–620 (GLSTPGAGIFSLFLLHDNGAGGVMAA) the chain is Periplasmic. The helical transmembrane segment at 621 to 641 (IGWFGAALVGAAISTAILLMW) threads the bilayer. Residues 642–658 (RRHAVKHGNYLTDGVMP) lie on the Cytoplasmic side of the membrane.

Its subcellular location is the cell inner membrane. It carries out the reaction (2R)-2-O-(alpha-D-mannosyl)-glycerate(out) + N(pros)-phospho-L-histidyl-[protein] = (2R)-2-O-(6-phospho-alpha-D-mannosyl)-glycerate(in) + L-histidyl-[protein]. Its function is as follows. The phosphoenolpyruvate-dependent sugar phosphotransferase system (sugar PTS), a major carbohydrate active transport system, catalyzes the phosphorylation of incoming sugar substrates concomitantly with their translocation across the cell membrane. This system is involved in mannosyl-D-glycerate transport. Also involved in thermoinduction of ompC. In Escherichia coli (strain K12), this protein is PTS system 2-O-alpha-mannosyl-D-glycerate-specific EIIABC component.